The following is a 415-amino-acid chain: Peptide chain release factor subunit 1-2 (415 aa).

It belongs to the eukaryotic release factor 1 family. In terms of assembly, heterodimer of two subunits, one of which binds GTP.

The protein resides in the cytoplasm. Functionally, directs the termination of nascent peptide synthesis (translation) in response to the termination codons UAA, UAG and UGA. The sequence is that of Peptide chain release factor subunit 1-2 from Methanosarcina acetivorans (strain ATCC 35395 / DSM 2834 / JCM 12185 / C2A).